The primary structure comprises 554 residues: Valerianol synthase TPS1B (554 aa).

Mg(2+)-binding residues include Asp307 and Asp311. Positions 326 to 330 (VQRWD) match the DDXXD motif motif. Asp452, Ser456, and Glu460 together coordinate Mg(2+).

It belongs to the terpene synthase family. It depends on Mg(2+) as a cofactor.

The catalysed reaction is (2E,6E)-farnesyl diphosphate + H2O = valerianol + diphosphate. It participates in secondary metabolite biosynthesis; terpenoid biosynthesis. In terms of biological role, terpene synthase that catalyzes the biosynthesis of the terpene valerianol, which is a volatile compound of floral scent. In Camellia hiemalis (Camellia), this protein is Valerianol synthase TPS1B.